A 690-amino-acid polypeptide reads, in one-letter code: Calpain-9 (690 aa).

The disordered stretch occupies residues 1–23; that stretch reads MPYLHRSLRPQPQPVPGDARTIH. A Calpain catalytic domain is found at 42-337; that stretch reads LFEDADFPAS…FDKVEICNLT (296 aa). The Ca(2+) site is built by L81, G83, and D88. The active site involves C97. A Ca(2+)-binding site is contributed by E167. Catalysis depends on residues H254 and N278. Ca(2+)-binding residues include E284, D291, L312, D314, and E316. The domain III stretch occupies residues 338–521; the sequence is PDALEDSALH…PQEEETEEEQ (184 aa). EF-hand domains follow at residues 518 to 552, 561 to 589, and 591 to 626; these read EEEQQFRALFQRVAGEDMEVSAEELEYVLNAVLQK, LSLLSCRNIISLMDTSGNGKLEFEEFRVF, and DKLKHWMDLFLQFDVDKSGTMSSYELRTALKAAGFQ. The segment at 522 to 690 is domain IV; sequence QFRALFQRVA…NEFISLTMNI (169 aa). D574, S576, N578, K580, E585, D604, D606, S608, T610, and E615 together coordinate Ca(2+).

It belongs to the peptidase C2 family. As to expression, predominantly expressed in stomach and small intestine, although low levels of expression in other organs.

Its subcellular location is the cytoplasm. Its function is as follows. Calcium-regulated non-lysosomal thiol-protease. The sequence is that of Calpain-9 (Capn9) from Mus musculus (Mouse).